The primary structure comprises 93 residues: MPRSLKKGPFVDDHLLKKVDVQNEKGTKHVIRTWSRRSTVIPDMLGHTIAVHDGRKHVPVFITEGMVGHKLGEFAPTRTFRGHVKEDRRSRRG.

The protein belongs to the universal ribosomal protein uS19 family.

Its function is as follows. Protein S19 forms a complex with S13 that binds strongly to the 16S ribosomal RNA. The sequence is that of Small ribosomal subunit protein uS19 from Parafrankia sp. (strain EAN1pec).